Consider the following 488-residue polypeptide: Tyrosine-protein kinase Srms (488 aa).

The region spanning 51–112 is the SH3 domain; it reads PFPQLFLALY…PITHVAKASP (62 aa). An SH2 domain is found at 120–212; sequence WYFSGVSRTQ…LIQNPLLQPC (93 aa). Positions 230–488 constitute a Protein kinase domain; sequence FALGRKLGEG…KLHAIHRCHP (259 aa). Residues 236–244 and Lys258 each bind ATP; that span reads LGEGYFGEV. The active-site Proton acceptor is Asp350. Position 380 is a phosphotyrosine; by autocatalysis (Tyr380).

It belongs to the protein kinase superfamily. Tyr protein kinase family. SRC subfamily. In terms of assembly, interacts (via the SH2 and SH3 domains) with DOK1. Interacts with KHDRBS1/SAM68 and VIM. As to expression, highly expressed in most breast cancers (at protein level).

It localises to the cytoplasm. It catalyses the reaction L-tyrosyl-[protein] + ATP = O-phospho-L-tyrosyl-[protein] + ADP + H(+). In terms of biological role, non-receptor tyrosine-protein kinase which phosphorylates DOK1 on tyrosine residues. Also phosphorylates KHDRBS1/SAM68 and VIM on tyrosine residues. Phosphorylation of KHDRBS1 is EGF-dependent. Phosphorylates OTUB1, promoting deubiquitination of RPTOR. The protein is Tyrosine-protein kinase Srms (SRMS) of Homo sapiens (Human).